The following is a 534-amino-acid chain: Pentatricopeptide repeat-containing protein At5g59600 (534 aa).

PPR repeat units follow at residues 50–80 (LTRI…MPKR), 81–115 (DISG…GLKL), 116–150 (DAFI…SYES), 151–181 (DAFI…LGEQ), 182–216 (DLVV…GIKP), 217–251 (DVIT…GYKP), 252–286 (DVVS…GLYP), 287–321 (NSAT…GLED), 322–352 (HGFV…TPKK), 353–387 (TTVT…GEKL), 388–418 (DHLT…MQNK), and 424–454 (RLEH…MRME). The segment at 459–534 (VWGALLAACR…FLGSSWVETV (76 aa)) is type E motif.

It belongs to the PPR family. PCMP-E subfamily.

This Arabidopsis thaliana (Mouse-ear cress) protein is Pentatricopeptide repeat-containing protein At5g59600 (PCMP-E1).